We begin with the raw amino-acid sequence, 496 residues long: Apolipoprotein N-acyltransferase (496 aa).

A run of 6 helical transmembrane segments spans residues 6 to 26 (IICLLLGILSGLVFAPIFFIP), 50 to 70 (FGYLFGFGHFLSGMYWISIGV), 77 to 97 (FWWAIPFALFGLPIILAFFIS), 114 to 134 (LIFCLLWVLFEWIRSWILTGL), 148 to 168 (ILIQPLSITGIYGLSFIVIYI), and 183 to 203 (LKILLASSMLILTVMVIYGAV). Residues 220–464 (VQPSIPQTAK…QGLIPQKLTT (245 aa)) form the CN hydrolase domain. Residue Glu259 is the Proton acceptor of the active site. Lys322 is an active-site residue. The active-site Nucleophile is Cys372. The chain crosses the membrane as a helical span at residues 474-494 (FAMLLSIVFIILIHYLLSLIF).

Belongs to the CN hydrolase family. Apolipoprotein N-acyltransferase subfamily.

Its subcellular location is the cell inner membrane. The catalysed reaction is N-terminal S-1,2-diacyl-sn-glyceryl-L-cysteinyl-[lipoprotein] + a glycerophospholipid = N-acyl-S-1,2-diacyl-sn-glyceryl-L-cysteinyl-[lipoprotein] + a 2-acyl-sn-glycero-3-phospholipid + H(+). It participates in protein modification; lipoprotein biosynthesis (N-acyl transfer). Functionally, catalyzes the phospholipid dependent N-acylation of the N-terminal cysteine of apolipoprotein, the last step in lipoprotein maturation. This Rickettsia prowazekii (strain Madrid E) protein is Apolipoprotein N-acyltransferase.